An 82-amino-acid chain; its full sequence is Acyl carrier protein (82 aa).

The 79-residue stretch at Leu3–Lys81 folds into the Carrier domain. Position 41 is an O-(pantetheine 4'-phosphoryl)serine (Ser41).

The protein belongs to the acyl carrier protein (ACP) family. 4'-phosphopantetheine is transferred from CoA to a specific serine of apo-ACP by AcpS. This modification is essential for activity because fatty acids are bound in thioester linkage to the sulfhydryl of the prosthetic group.

It localises to the cytoplasm. The protein operates within lipid metabolism; fatty acid biosynthesis. Functionally, carrier of the growing fatty acid chain in fatty acid biosynthesis. In Tropheryma whipplei (strain Twist) (Whipple's bacillus), this protein is Acyl carrier protein.